We begin with the raw amino-acid sequence, 332 residues long: CRISPR-associated endonuclease Cas1 3 (332 aa).

Glu-159, His-224, and Glu-239 together coordinate Mn(2+).

It belongs to the CRISPR-associated endonuclease Cas1 family. In terms of assembly, homodimer, forms a heterotetramer with a Cas2 homodimer. It depends on Mg(2+) as a cofactor. The cofactor is Mn(2+).

CRISPR (clustered regularly interspaced short palindromic repeat), is an adaptive immune system that provides protection against mobile genetic elements (viruses, transposable elements and conjugative plasmids). CRISPR clusters contain spacers, sequences complementary to antecedent mobile elements, and target invading nucleic acids. CRISPR clusters are transcribed and processed into CRISPR RNA (crRNA). Acts as a dsDNA endonuclease. Involved in the integration of spacer DNA into the CRISPR cassette. The sequence is that of CRISPR-associated endonuclease Cas1 3 from Thermus thermophilus (strain ATCC 27634 / DSM 579 / HB8).